The chain runs to 203 residues: RNA annealing protein YRA2 (203 aa).

At M1 the chain carries N-acetylmethionine. Disordered regions lie at residues 1 to 60 and 134 to 203; these read MDKA…REEP and EIYQ…YMKG. Polar residues predominate over residues 11-20; it reads NSHTDSSSNH. Positions 47–60 are enriched in basic and acidic residues; it reads SRSKDRLYREREEP. The RRM domain maps to 64 to 138; that stretch reads KRIRISKIPL…AKIEVEIYQP (75 aa). Composition is skewed to basic residues over residues 139–153 and 163–180; these read QRKH…RRKQ and PGSH…KNKG.

Belongs to the YRA1 family. As to quaternary structure, associates with mRNPs. Interacts with YRA1.

The protein localises to the nucleus. Functionally, involved in export of poly(A) mRNAs from the nucleus. Recruited to the coding sequences as well as poly-A sites of active genes. This chain is RNA annealing protein YRA2 (YRA2), found in Saccharomyces cerevisiae (strain RM11-1a) (Baker's yeast).